Reading from the N-terminus, the 314-residue chain is Methionyl-tRNA formyltransferase (314 aa).

109 to 112 (SLLP) provides a ligand contact to (6S)-5,6,7,8-tetrahydrofolate.

This sequence belongs to the Fmt family.

It carries out the reaction L-methionyl-tRNA(fMet) + (6R)-10-formyltetrahydrofolate = N-formyl-L-methionyl-tRNA(fMet) + (6S)-5,6,7,8-tetrahydrofolate + H(+). Attaches a formyl group to the free amino group of methionyl-tRNA(fMet). The formyl group appears to play a dual role in the initiator identity of N-formylmethionyl-tRNA by promoting its recognition by IF2 and preventing the misappropriation of this tRNA by the elongation apparatus. This Alkaliphilus metalliredigens (strain QYMF) protein is Methionyl-tRNA formyltransferase.